The following is a 155-amino-acid chain: Large ribosomal subunit protein uL30 (155 aa).

This sequence belongs to the universal ribosomal protein uL30 family. Part of the 50S ribosomal subunit.

The protein is Large ribosomal subunit protein uL30 of Cenarchaeum symbiosum (strain A).